The following is a 578-amino-acid chain: GRAM domain-containing protein 4 (578 aa).

Disordered regions lie at residues 23–58 and 136–159; these read ESPN…AGPG and TEEQ…ERRS. Ser24 and Ser28 each carry phosphoserine. A compositionally biased stretch (basic and acidic residues) spans 44-53; sequence SPRDSEELRD. Residues 83–143 adopt a coiled-coil conformation; it reads HLEIALLEKH…ARTEEQMAQQ (61 aa). Helical transmembrane passes span 240-260, 334-354, and 356-376; these read VYMN…LAIL, ITQK…FFPY, and LVGL…DFIF. Positions 415–435 are disordered; sequence QTTSSRSYVPSAPAGLGKEED. The 79-residue stretch at 445-523 folds into the GRAM domain; that stretch reads GNFHEIFNLT…VDITDIQKYK (79 aa).

Interacts with RTN4 (isoform B). As to expression, expressed in lung and in primary lung squamous cell carcinoma (LSCC).

Its subcellular location is the mitochondrion membrane. It is found in the endoplasmic reticulum membrane. In terms of biological role, plays a role as a mediator of E2F1-induced apoptosis in the absence of p53/TP53. Plays a role as a mediator of E2F1-induced apoptosis in the absence of p53/TP53. Inhibits TLR9 response to nucelic acids and regulates TLR9-mediated innate immune response. The polypeptide is GRAM domain-containing protein 4 (Homo sapiens (Human)).